A 532-amino-acid polypeptide reads, in one-letter code: Flavin-containing monooxygenase 1 (532 aa).

At 1 to 510 (MVKRVAIVGA…TRTIQESPSS (510 aa)) the chain is on the lumenal side. FAD is bound by residues 9-13 (GAGVS), E32, 40-41 (LW), and 61-62 (NS). Residues 60–61 (SN) and 195–198 (SGTD) contribute to the NADP(+) site. A helical transmembrane segment spans residues 511-531 (FETLLKLFSFLALLIAVFLIF). A topological domain (cytoplasmic) is located at residue L532.

This sequence belongs to the FMO family. Requires FAD as cofactor. As to expression, liver.

The protein resides in the endoplasmic reticulum membrane. It carries out the reaction hypotaurine + NADPH + O2 + H(+) = taurine + NADP(+) + H2O. The catalysed reaction is hypotaurine + NADH + O2 + H(+) = taurine + NAD(+) + H2O. It catalyses the reaction trimethylamine + NADPH + O2 = trimethylamine N-oxide + NADP(+) + H2O. The enzyme catalyses N,N-dimethylaniline + NADPH + O2 + H(+) = N,N-dimethylaniline N-oxide + NADP(+) + H2O. Its function is as follows. Broad spectrum monooxygenase that catalyzes the oxygenation of a wide variety of nitrogen- and sulfur-containing compounds including xenobiotics. Catalyzes the S-oxygenation of hypotaurine to produce taurine, an organic osmolyte involved in cell volume regulation as well as a variety of cytoprotective and developmental processes. In vitro, catalyzes the N-oxygenation of trimethylamine (TMA) to produce trimethylamine N-oxide (TMAO) and could therefore participate to the detoxification of this compound that is generated by the action of gut microbiota from dietary precursors such as choline, choline containing compounds, betaine or L-carnitine. The polypeptide is Flavin-containing monooxygenase 1 (Mus musculus (Mouse)).